The chain runs to 108 residues: Protein SMALL AUXIN UP-REGULATED RNA 8 (108 aa).

It belongs to the ARG7 family. In terms of tissue distribution, expressed in seedlings, leaves and flowers.

The protein localises to the cell membrane. Its function is as follows. Provide a mechanistic link between auxin and plasma membrane H(+)-ATPases (PM H(+)-ATPases, e.g. AHA1 and AHA2), and triggers PM H(+)-ATPases activity by promoting phosphorylation of their C-terminal autoinhibitory domain as a result of PP2C-D subfamily of type 2C phosphatases inhibition, thus leading to the acidification of the apoplast and the facilitation of solutes and water uptake to drive cell expansion. Triggers plant growth probably by promoting cell elongation. Regulates branch angles and bending. This Arabidopsis thaliana (Mouse-ear cress) protein is Protein SMALL AUXIN UP-REGULATED RNA 8.